We begin with the raw amino-acid sequence, 156 residues long: 17.7 kDa class II heat shock protein (156 aa).

The 118-residue stretch at 39–156 (DAKAMAATPA…KPKTIQVQVA (118 aa)) folds into the sHSP domain.

It belongs to the small heat shock protein (HSP20) family. In terms of assembly, may form oligomeric structures.

Its subcellular location is the cytoplasm. In Arabidopsis thaliana (Mouse-ear cress), this protein is 17.7 kDa class II heat shock protein (HSP17.7).